Consider the following 327-residue polypeptide: MDSDAAQKTWELENNIQTLPSCDEIFRYDAEQQRQIIDAKPWEKDPHFFKDIKISALALLKMVMHARSGGTLEVMGLMLGKVEDNTMIVMDAFALPVEGTETRVNAQAQAYEYMTAYMEAAKEVGRMEHAVGWYHSHPGYGCWLSGIDVSTQMLNQTYQEPFVAIVVDPVRTVSAGKVCLGAFRTYPKGYKPPNEEPSEYQTIPLNKIEDFGVHCKQYYPLEISYFKSALDRRLLDSLWNKYWVNTLGSSGLLTNTEYTTGQIMDLSEKLEQSENFLGRGTDVNEKRSEDKLSKATRDCSRSTIELIHGLMAQIVKDKLFNKVGLGK.

The MPN domain maps to 52-189 (IKISALALLK…LGAFRTYPKG (138 aa)). H135, H137, and D148 together coordinate Zn(2+). The JAMM motif signature appears at 135–148 (HSHPGYGCWLSGID). 2 positions are modified to phosphoserine: S300 and S302. A Phosphothreonine modification is found at T303.

The protein belongs to the peptidase M67A family. CSN5 subfamily. In terms of assembly, component of the CSN complex, probably composed of CSN1b, alien/CSN2, CSN3, CSN4, CSN5, CSN6, CSN7 and CSN8. Interacts directly with CSN2. Also exists as monomeric form. Interacts via its MPN domain with Trc8. It depends on a divalent metal cation as a cofactor. Expressed in the optic lobe neuropil.

The protein resides in the cytoplasm. Its subcellular location is the nucleus. Functionally, probable protease subunit of the COP9 signalosome complex (CSN), a complex involved in various cellular and developmental processes. The CSN complex is an essential regulator of the ubiquitin (Ubl) conjugation pathway by mediating the deneddylation of the cullin subunits of the SCF-type E3 ligase complexes, leading to decrease the Ubl ligase activity of SCF. In the complex, it probably acts as the catalytic center that mediates the cleavage of Nedd8 from cullins. It however has no metalloprotease activity by itself and requires the other subunits of the CSN complex. The CSN complex plays an essential role in oogenesis and embryogenesis and is required for proper photoreceptor R cell differentiation and promote lamina glial cell migration or axon targeting. It also promotes Ubl-dependent degradation of cyclin E (CycE) during early oogenesis. Also involved in regulation of axis formation by checkpoint-dependent, translational control of Gurken. The chain is COP9 signalosome complex subunit 5 (CSN5) from Drosophila melanogaster (Fruit fly).